A 138-amino-acid polypeptide reads, in one-letter code: Basic phospholipase A2 DAV-N6 (138 aa).

Residues 1-16 (MRTLWIVAVLLVSVEG) form the signal peptide. Disulfide bonds link cysteine 42-cysteine 131, cysteine 44-cysteine 60, cysteine 59-cysteine 111, cysteine 65-cysteine 138, cysteine 66-cysteine 104, cysteine 73-cysteine 97, and cysteine 91-cysteine 102. Tyrosine 43, glycine 45, and glycine 47 together coordinate Ca(2+). Residue histidine 63 is part of the active site. Residue aspartate 64 participates in Ca(2+) binding. Aspartate 105 is a catalytic residue.

It depends on Ca(2+) as a cofactor. Expressed by the venom gland.

Its subcellular location is the secreted. It catalyses the reaction a 1,2-diacyl-sn-glycero-3-phosphocholine + H2O = a 1-acyl-sn-glycero-3-phosphocholine + a fatty acid + H(+). Functionally, snake venom phospholipase A2 (PLA2) that inhibits neuromuscular transmission by blocking acetylcholine release from the nerve termini. PLA2 catalyzes the calcium-dependent hydrolysis of the 2-acyl groups in 3-sn-phosphoglycerides. The polypeptide is Basic phospholipase A2 DAV-N6 (Deinagkistrodon acutus (Hundred-pace snake)).